A 365-amino-acid polypeptide reads, in one-letter code: Undecaprenyl-phosphate alpha-N-acetylglucosaminyl 1-phosphate transferase (365 aa).

10 helical membrane passes run 3–23, 45–65, 99–119, 132–152, 157–177, 187–207, 213–233, 242–262, 293–313, and 315–335; these read LLTM…FLFV, GLIP…AFLI, IRAF…GLYL, VLGP…INAF, GIDG…GILL, LWCF…LGLL, VFMG…ILLQ, INPV…IAIM, QAFV…VIGE, and LTFI…LLYG.

Belongs to the glycosyltransferase 4 family. WecA subfamily. Mg(2+) serves as cofactor. Mn(2+) is required as a cofactor.

The protein resides in the cell inner membrane. It catalyses the reaction di-trans,octa-cis-undecaprenyl phosphate + UDP-N-acetyl-alpha-D-glucosamine = N-acetyl-alpha-D-glucosaminyl-di-trans,octa-cis-undecaprenyl diphosphate + UMP. It participates in bacterial outer membrane biogenesis; LPS O-antigen biosynthesis. It functions in the pathway bacterial outer membrane biogenesis; enterobacterial common antigen biosynthesis. Catalyzes the transfer of the GlcNAc-1-phosphate moiety from UDP-GlcNAc onto the carrier lipid undecaprenyl phosphate (C55-P), yielding GlcNAc-pyrophosphoryl-undecaprenyl (GlcNAc-PP-C55). The sequence is that of Undecaprenyl-phosphate alpha-N-acetylglucosaminyl 1-phosphate transferase from Yersinia pestis.